We begin with the raw amino-acid sequence, 216 residues long: Dephospho-CoA kinase (216 aa).

The DPCK domain maps to 18–216 (IIGVIGPPCS…SELASVLQSK (199 aa)). 26–31 (CSGKST) is an ATP binding site.

It belongs to the CoaE family.

It is found in the cytoplasm. It catalyses the reaction 3'-dephospho-CoA + ATP = ADP + CoA + H(+). Its pathway is cofactor biosynthesis; coenzyme A biosynthesis; CoA from (R)-pantothenate: step 5/5. Its function is as follows. Catalyzes the phosphorylation of the 3'-hydroxyl group of dephosphocoenzyme A to form coenzyme A. In Rhodopirellula baltica (strain DSM 10527 / NCIMB 13988 / SH1), this protein is Dephospho-CoA kinase.